Consider the following 310-residue polypeptide: Homoserine kinase (310 aa).

91–101 (PIGSGLGSSAC) contributes to the ATP binding site.

Belongs to the GHMP kinase family. Homoserine kinase subfamily.

It is found in the cytoplasm. The catalysed reaction is L-homoserine + ATP = O-phospho-L-homoserine + ADP + H(+). It functions in the pathway amino-acid biosynthesis; L-threonine biosynthesis; L-threonine from L-aspartate: step 4/5. Functionally, catalyzes the ATP-dependent phosphorylation of L-homoserine to L-homoserine phosphate. This is Homoserine kinase from Escherichia coli O139:H28 (strain E24377A / ETEC).